Consider the following 1037-residue polypeptide: Probable serine/threonine-protein kinase KCC4 (1037 aa).

A Protein kinase domain is found at 21-285 (WKLGETLGFG…IRDILSHPLL (265 aa)). ATP-binding positions include 27–35 (LGFGSTGKV) and Lys50. Catalysis depends on Asp152, which acts as the Proton acceptor. Basic residues predominate over residues 372–387 (NKKNRNKIKKTKKNKR). The segment at 372 to 494 (NKKNRNKIKK…MPNTKRSSLT (123 aa)) is disordered. Residues 388 to 404 (SSTLSSSSSLLLNNRSI) show a composition bias toward low complexity. At Ser396 the chain carries Phosphoserine. Basic residues predominate over residues 408–427 (PRRRTSKRHSREFSSSRKRS). Residues 453–465 (NVASANTQATPSG) are compositionally biased toward polar residues. The segment covering 469–480 (PHKRNSKKRSSK) has biased composition (basic residues). The segment covering 481-494 (RLSYMPNTKRSSLT) has biased composition (low complexity). Phosphoserine occurs at positions 675, 707, 777, 822, 825, and 871. Disordered stretches follow at residues 746 to 804 (LIKE…DFPQ), 810 to 829 (QEYD…KSAE), and 861 to 918 (TLPS…TVKK). The segment covering 861 to 873 (TLPSLTSNNSSVG) has biased composition (polar residues). Basic and acidic residues predominate over residues 879–888 (GAEKGTESEK).

Belongs to the protein kinase superfamily. CAMK Ser/Thr protein kinase family. NIM1 subfamily. In terms of assembly, interacts with septin proteins, primarily with CDC11. Interacts with SWE1 and NAP1.

Its subcellular location is the bud neck. The enzyme catalyses L-seryl-[protein] + ATP = O-phospho-L-seryl-[protein] + ADP + H(+). It catalyses the reaction L-threonyl-[protein] + ATP = O-phospho-L-threonyl-[protein] + ADP + H(+). Involved in regulation of bud growth during cell cycle and in septin organization. Plays a role in cell wall synthesis. The chain is Probable serine/threonine-protein kinase KCC4 (KCC4) from Saccharomyces cerevisiae (strain ATCC 204508 / S288c) (Baker's yeast).